The sequence spans 339 residues: Small ribosomal subunit biogenesis GTPase RsgA (339 aa).

Positions 111–271 (MRGLLKPVAA…LIDSPGIREF (161 aa)) constitute a CP-type G domain. GTP is bound by residues 159-162 (NKAD) and 213-221 (GQSGVGKSS). Cys-295, Cys-300, His-302, and Cys-308 together coordinate Zn(2+).

This sequence belongs to the TRAFAC class YlqF/YawG GTPase family. RsgA subfamily. In terms of assembly, monomer. Associates with 30S ribosomal subunit, binds 16S rRNA. The cofactor is Zn(2+).

It localises to the cytoplasm. One of several proteins that assist in the late maturation steps of the functional core of the 30S ribosomal subunit. Helps release RbfA from mature subunits. May play a role in the assembly of ribosomal proteins into the subunit. Circularly permuted GTPase that catalyzes slow GTP hydrolysis, GTPase activity is stimulated by the 30S ribosomal subunit. In Pseudomonas aeruginosa (strain ATCC 15692 / DSM 22644 / CIP 104116 / JCM 14847 / LMG 12228 / 1C / PRS 101 / PAO1), this protein is Small ribosomal subunit biogenesis GTPase RsgA.